A 516-amino-acid chain; its full sequence is mRNA export factor ICP27 homolog (516 aa).

4 residues coordinate Zn(2+): Cys-231, His-336, Cys-338, and Cys-343. The CHC2-type zinc finger occupies Cys-231–Cys-343. Residues Tyr-399–Ser-409 are compositionally biased toward polar residues. Residues Tyr-399–Ser-423 form a disordered region.

This sequence belongs to the HHV-1 ICP27 protein family.

It is found in the virion tegument. The protein resides in the virion. The protein localises to the host nucleus. Its subcellular location is the host cytoplasm. Functionally, immediate early (EI) protein that plays many roles during productive infection including regulation of viral gene expression and nuclear export of intronless viral RNAs. In Homo sapiens (Human), this protein is mRNA export factor ICP27 homolog.